A 166-amino-acid chain; its full sequence is Large ribosomal subunit protein uL10 (166 aa).

It belongs to the universal ribosomal protein uL10 family. As to quaternary structure, part of the ribosomal stalk of the 50S ribosomal subunit. The N-terminus interacts with L11 and the large rRNA to form the base of the stalk. The C-terminus forms an elongated spine to which L12 dimers bind in a sequential fashion forming a multimeric L10(L12)X complex.

Functionally, forms part of the ribosomal stalk, playing a central role in the interaction of the ribosome with GTP-bound translation factors. The protein is Large ribosomal subunit protein uL10 of Streptococcus agalactiae serotype III (strain NEM316).